The chain runs to 216 residues: Glycerol-3-phosphate acyltransferase 3 (216 aa).

The next 5 helical transmembrane spans lie at 6–26, 58–78, 92–112, 125–145, and 158–178; these read LLLV…YLVS, LVAA…GLVI, ILFA…WPVF, FGGM…VLII, and ITGV…SGFP.

It belongs to the PlsY family. Probably interacts with PlsX.

It is found in the cell membrane. It catalyses the reaction an acyl phosphate + sn-glycerol 3-phosphate = a 1-acyl-sn-glycero-3-phosphate + phosphate. It participates in lipid metabolism; phospholipid metabolism. In terms of biological role, catalyzes the transfer of an acyl group from acyl-phosphate (acyl-PO(4)) to glycerol-3-phosphate (G3P) to form lysophosphatidic acid (LPA). This enzyme utilizes acyl-phosphate as fatty acyl donor, but not acyl-CoA or acyl-ACP. The protein is Glycerol-3-phosphate acyltransferase 3 of Dehalococcoides mccartyi (strain ATCC BAA-2266 / KCTC 15142 / 195) (Dehalococcoides ethenogenes (strain 195)).